Consider the following 302-residue polypeptide: Protoheme IX farnesyltransferase (302 aa).

The next 9 helical transmembrane spans lie at Leu28–Pro48, Met50–Met70, Leu93–Ala115, Tyr119–Leu138, Ile147–Gly167, Gly172–Gly192, Leu219–Gly239, Phe242–Phe262, and Ala271–Leu291.

The protein belongs to the UbiA prenyltransferase family. Protoheme IX farnesyltransferase subfamily.

It localises to the cell membrane. The enzyme catalyses heme b + (2E,6E)-farnesyl diphosphate + H2O = Fe(II)-heme o + diphosphate. Its pathway is porphyrin-containing compound metabolism; heme O biosynthesis; heme O from protoheme: step 1/1. Converts heme B (protoheme IX) to heme O by substitution of the vinyl group on carbon 2 of heme B porphyrin ring with a hydroxyethyl farnesyl side group. The sequence is that of Protoheme IX farnesyltransferase from Aeropyrum pernix (strain ATCC 700893 / DSM 11879 / JCM 9820 / NBRC 100138 / K1).